The primary structure comprises 401 residues: Chromate transport protein (401 aa).

The next 12 membrane-spanning stretches (helical) occupy residues Leu26–Gly46, Gly67–Gly87, Ile93–Ala113, Leu124–Ile144, Val172–Trp192, Ala214–Phe234, Ala237–Val257, Val272–Ala294, Ala299–Phe321, Ile330–Ile350, Ser356–Phe376, and Leu379–Leu399.

It belongs to the chromate ion transporter (CHR) (TC 2.A.51) family.

The protein localises to the cell inner membrane. This protein reduces chromate accumulation and is essential for chromate resistance. This chain is Chromate transport protein, found in Cupriavidus metallidurans (strain ATCC 43123 / DSM 2839 / NBRC 102507 / CH34) (Ralstonia metallidurans).